Reading from the N-terminus, the 177-residue chain is Large ribosomal subunit protein uL6 (177 aa).

This sequence belongs to the universal ribosomal protein uL6 family. In terms of assembly, part of the 50S ribosomal subunit.

In terms of biological role, this protein binds to the 23S rRNA, and is important in its secondary structure. It is located near the subunit interface in the base of the L7/L12 stalk, and near the tRNA binding site of the peptidyltransferase center. The chain is Large ribosomal subunit protein uL6 from Cupriavidus pinatubonensis (strain JMP 134 / LMG 1197) (Cupriavidus necator (strain JMP 134)).